A 341-amino-acid chain; its full sequence is 4-hydroxy-2-oxovalerate aldolase (341 aa).

Positions 9–259 constitute a Pyruvate carboxyltransferase domain; sequence VRITEVCLRD…KLDIDLYKMM (251 aa). 17–18 contacts substrate; the sequence is RD. Aspartate 18 contributes to the Mn(2+) binding site. Histidine 21 (proton acceptor) is an active-site residue. Serine 171 and histidine 198 together coordinate substrate. The Mn(2+) site is built by histidine 198 and histidine 200. Substrate is bound at residue tyrosine 289.

The protein belongs to the 4-hydroxy-2-oxovalerate aldolase family.

It carries out the reaction (S)-4-hydroxy-2-oxopentanoate = acetaldehyde + pyruvate. The polypeptide is 4-hydroxy-2-oxovalerate aldolase (Bacillus thuringiensis (strain Al Hakam)).